A 464-amino-acid polypeptide reads, in one-letter code: Siroheme synthase (464 aa).

The segment at 1–203 (MEFLPLFHNL…GQGAEAERLL (203 aa)) is precorrin-2 dehydrogenase /sirohydrochlorin ferrochelatase. NAD(+) contacts are provided by residues 22 to 23 (EI) and 43 to 44 (PE). S128 is subject to Phosphoserine. Residues 216–464 (GEVYLVGAGP…AWFEGAQATV (249 aa)) form a uroporphyrinogen-III C-methyltransferase region. P225 is an S-adenosyl-L-methionine binding site. The active-site Proton acceptor is the D248. Residue K270 is the Proton donor of the active site. S-adenosyl-L-methionine contacts are provided by residues 301–303 (GGD), I306, 331–332 (TA), M383, and G412.

It in the N-terminal section; belongs to the precorrin-2 dehydrogenase / sirohydrochlorin ferrochelatase family. In the C-terminal section; belongs to the precorrin methyltransferase family.

It carries out the reaction uroporphyrinogen III + 2 S-adenosyl-L-methionine = precorrin-2 + 2 S-adenosyl-L-homocysteine + H(+). The catalysed reaction is precorrin-2 + NAD(+) = sirohydrochlorin + NADH + 2 H(+). It catalyses the reaction siroheme + 2 H(+) = sirohydrochlorin + Fe(2+). It functions in the pathway cofactor biosynthesis; adenosylcobalamin biosynthesis; precorrin-2 from uroporphyrinogen III: step 1/1. It participates in cofactor biosynthesis; adenosylcobalamin biosynthesis; sirohydrochlorin from precorrin-2: step 1/1. The protein operates within porphyrin-containing compound metabolism; siroheme biosynthesis; precorrin-2 from uroporphyrinogen III: step 1/1. Its pathway is porphyrin-containing compound metabolism; siroheme biosynthesis; siroheme from sirohydrochlorin: step 1/1. It functions in the pathway porphyrin-containing compound metabolism; siroheme biosynthesis; sirohydrochlorin from precorrin-2: step 1/1. Its function is as follows. Multifunctional enzyme that catalyzes the SAM-dependent methylations of uroporphyrinogen III at position C-2 and C-7 to form precorrin-2 via precorrin-1. Then it catalyzes the NAD-dependent ring dehydrogenation of precorrin-2 to yield sirohydrochlorin. Finally, it catalyzes the ferrochelation of sirohydrochlorin to yield siroheme. This is Siroheme synthase from Pseudomonas savastanoi pv. phaseolicola (strain 1448A / Race 6) (Pseudomonas syringae pv. phaseolicola (strain 1448A / Race 6)).